The following is a 336-amino-acid chain: Mitochondrial thiamine diphosphate carrier 1 (336 aa).

The next 6 helical transmembrane spans lie at 11–27 (RRAL…GGIS), 88–105 (VPAL…FTVL), 127–150 (YLSY…FDLL), 182–199 (LYSG…YAGL), 230–246 (SVSS…AGTF), and 303–322 (GLFP…FVVY). 3 Solcar repeats span residues 11–111 (RRAL…LKTF), 124–210 (LSPY…FKRS), and 231–328 (VSSF…ISDW).

This sequence belongs to the mitochondrial carrier (TC 2.A.29) family. As to expression, ubiquitous with highest expression in pollen.

The protein resides in the mitochondrion inner membrane. In terms of biological role, mitochondrial transporter that mediates uptake of thiamine diphosphate (ThDP) into mitochondria. This chain is Mitochondrial thiamine diphosphate carrier 1, found in Zea mays (Maize).